Here is a 130-residue protein sequence, read N- to C-terminus: Small ribosomal subunit protein bS6 (130 aa).

The disordered stretch occupies residues 96–130 (VTEASPMAKARDERDSRRSPSDDRIEEESAEENAE). Residues 104–118 (KARDERDSRRSPSDD) are compositionally biased toward basic and acidic residues. A compositionally biased stretch (acidic residues) spans 119 to 130 (RIEEESAEENAE).

It belongs to the bacterial ribosomal protein bS6 family.

Its function is as follows. Binds together with bS18 to 16S ribosomal RNA. This chain is Small ribosomal subunit protein bS6, found in Shewanella denitrificans (strain OS217 / ATCC BAA-1090 / DSM 15013).